The chain runs to 257 residues: tRNA pseudouridine synthase A (257 aa).

Aspartate 43 acts as the Nucleophile in catalysis. Tyrosine 94 provides a ligand contact to substrate.

Belongs to the tRNA pseudouridine synthase TruA family.

The catalysed reaction is uridine(38/39/40) in tRNA = pseudouridine(38/39/40) in tRNA. Formation of pseudouridine at positions 38, 39 and 40 in the anticodon stem and loop of transfer RNAs. The polypeptide is tRNA pseudouridine synthase A (Pyrobaculum calidifontis (strain DSM 21063 / JCM 11548 / VA1)).